Here is a 225-residue protein sequence, read N- to C-terminus: 3-dehydroquinate dehydratase (225 aa).

3-dehydroquinate is bound by residues 30 to 32 and R62; that span reads EWR. The active-site Proton donor/acceptor is the H118. The active-site Schiff-base intermediate with substrate is the K143. 3-dehydroquinate-binding residues include R186, S205, and Q209.

Belongs to the type-I 3-dehydroquinase family. As to quaternary structure, homodimer.

The enzyme catalyses 3-dehydroquinate = 3-dehydroshikimate + H2O. Its pathway is metabolic intermediate biosynthesis; chorismate biosynthesis; chorismate from D-erythrose 4-phosphate and phosphoenolpyruvate: step 3/7. Involved in the third step of the chorismate pathway, which leads to the biosynthesis of aromatic amino acids. Catalyzes the cis-dehydration of 3-dehydroquinate (DHQ) and introduces the first double bond of the aromatic ring to yield 3-dehydroshikimate. This Streptococcus thermophilus (strain ATCC BAA-491 / LMD-9) protein is 3-dehydroquinate dehydratase.